Consider the following 194-residue polypeptide: Endoribonuclease ToxN (194 aa).

The stretch at 114–182 forms a coiled coil; it reads MLKQYLFLKE…DQAKERDKAR (69 aa). The span at 171 to 182 shows a compositional bias: basic and acidic residues; the sequence is ERDQAKERDKAR. A disordered region spans residues 171 to 194; that stretch reads ERDQAKERDKARRIAYMRQMGRER.

Belongs to the ToxN/AbiQ toxin family. One ToxN monomer binds to a 34-nt-long single repeat of the ToxI RNA; this complex forms a triangular heterohexameric complex with ToxN connected by the ToxI RNA to another toxin molecule. The ToxI repeats are cleavage products of their precursor. The ToxI repeat forms a pseudoknot which occludes the toxin active site.

Toxic component of a type III toxin-antitoxin (TA) system. An endoribonuclease which cleaves between the first and second A of AAAAA sequences; it tolerates other nucleotides in positions +2 and +4 of the consensus. Digests cognate antitoxin RNA ToxI as shown by the 2'-3'-cyclic phosphate at the 3' end of the 34-nt repeats and probably other RNAs. Inhibits growth when expressed in E.coli without causing cell lysis; this bacteriostatic effect is neutralized by cognate RNA antitoxin ToxI, which has 2.9 nearly identical 34 nucleotide-long repeats. Non-cognate antitoxin RNA from P.atrosepticum does not inhibit this toxin. The toxin-antitoxin pair function in plasmid maintenance (a plasmid addiction system), but unlike its P.atrosepticum homolog it is not seen to confer resistance to bacteriophages. The sequence is that of Endoribonuclease ToxN from Bacillus thuringiensis subsp. kurstaki.